A 314-amino-acid chain; its full sequence is Polyamine aminopropyltransferase (314 aa).

Residues 4–241 (GMYFFEHVTP…LNFGFLLASD (238 aa)) form the PABS domain. Residue Gln33 coordinates S-methyl-5'-thioadenosine. His64 and Glu88 together coordinate spermidine. S-methyl-5'-thioadenosine contacts are provided by residues Asp108 and 140–141 (DA). Residue Asp158 is the Proton acceptor of the active site. Pro168 is an S-methyl-5'-thioadenosine binding site.

Belongs to the spermidine/spermine synthase family. In terms of assembly, homodimer or homotetramer.

It localises to the cytoplasm. It catalyses the reaction S-adenosyl 3-(methylsulfanyl)propylamine + putrescine = S-methyl-5'-thioadenosine + spermidine + H(+). It functions in the pathway amine and polyamine biosynthesis; spermidine biosynthesis; spermidine from putrescine: step 1/1. In terms of biological role, catalyzes the irreversible transfer of a propylamine group from the amino donor S-adenosylmethioninamine (decarboxy-AdoMet) to putrescine (1,4-diaminobutane) to yield spermidine. This Thermus thermophilus (strain ATCC BAA-163 / DSM 7039 / HB27) protein is Polyamine aminopropyltransferase.